Consider the following 469-residue polypeptide: UDP-N-acetylmuramoylalanine--D-glutamate ligase (469 aa).

Glycine 110–threonine 116 provides a ligand contact to ATP.

The protein belongs to the MurCDEF family.

It localises to the cytoplasm. The catalysed reaction is UDP-N-acetyl-alpha-D-muramoyl-L-alanine + D-glutamate + ATP = UDP-N-acetyl-alpha-D-muramoyl-L-alanyl-D-glutamate + ADP + phosphate + H(+). It participates in cell wall biogenesis; peptidoglycan biosynthesis. Functionally, cell wall formation. Catalyzes the addition of glutamate to the nucleotide precursor UDP-N-acetylmuramoyl-L-alanine (UMA). This is UDP-N-acetylmuramoylalanine--D-glutamate ligase from Synechococcus sp. (strain JA-3-3Ab) (Cyanobacteria bacterium Yellowstone A-Prime).